The sequence spans 536 residues: Major facilitator superfamily domain-containing protein 4B (536 aa).

The next 12 membrane-spanning stretches (helical) occupy residues 19–39, 53–73, 81–101, 105–125, 140–160, 211–231, 297–317, 341–361, 366–386, 391–411, 428–448, and 456–476; these read LTYW…GPTI, ITWV…SGGA, ALLA…IIPL, VLLL…IDTI, IFLQ…PLIA, YAFW…FVLM, FFLI…IMGV, LNCI…PLSY, VHLL…LMIL, VFLF…FPCL, VLVT…GTLI, and FLVC…SVIL.

The protein belongs to the major facilitator superfamily.

Its subcellular location is the membrane. The sequence is that of Major facilitator superfamily domain-containing protein 4B from Danio rerio (Zebrafish).